Reading from the N-terminus, the 329-residue chain is Beta-ketoacyl-[acyl-carrier-protein] synthase III (329 aa).

Active-site residues include C114 and H254. An ACP-binding region spans residues 255 to 259 (QANLR). The active site involves N284.

It belongs to the thiolase-like superfamily. FabH family. In terms of assembly, homodimer.

Its subcellular location is the cytoplasm. The enzyme catalyses malonyl-[ACP] + acetyl-CoA + H(+) = 3-oxobutanoyl-[ACP] + CO2 + CoA. It participates in lipid metabolism; fatty acid biosynthesis. Catalyzes the condensation reaction of fatty acid synthesis by the addition to an acyl acceptor of two carbons from malonyl-ACP. Catalyzes the first condensation reaction which initiates fatty acid synthesis and may therefore play a role in governing the total rate of fatty acid production. Possesses both acetoacetyl-ACP synthase and acetyl transacylase activities. Its substrate specificity determines the biosynthesis of branched-chain and/or straight-chain of fatty acids. This Roseiflexus sp. (strain RS-1) protein is Beta-ketoacyl-[acyl-carrier-protein] synthase III.